The sequence spans 340 residues: Integral membrane protein SED5 (340 aa).

Residues 1–319 (MNIKDRTSEF…KYFDRIKSNR (319 aa)) lie on the Cytoplasmic side of the membrane. Residues 31–51 (RLQEKESENFANNTTGNGKSV) are disordered. A compositionally biased stretch (polar residues) spans 39-51 (NFANNTTGNGKSV). Positions 146-173 (LNTQMKNISGSFKDVLEERQRLEMANKD) form a coiled coil. The tract at residues 180–231 (TDTGHAPADDQTQSNHAADLTTYNNSNPFMTSLLDESSEKNNNSSNQGELSF) is disordered. A compositionally biased stretch (polar residues) spans 189 to 209 (DQTQSNHAADLTTYNNSNPFM). The t-SNARE coiled-coil homology domain occupies 249–311 (NVYLQERNRA…SGAQRELLKY (63 aa)). A helical; Anchor for type IV membrane protein transmembrane segment spans residues 320 to 340 (WLAAKVFFIIFVFFVIWVLVN).

The protein belongs to the syntaxin family. Interacts with SLY1, STF1, SFB3 and GOS1.

Its subcellular location is the membrane. It is found in the golgi apparatus membrane. Functionally, required for vesicular transport between the endoplasmic reticulum and the Golgi complex. Acts as a target organelle soluble NSF attachment protein receptor (t-SNARE). The polypeptide is Integral membrane protein SED5 (SED5) (Saccharomyces cerevisiae (strain ATCC 204508 / S288c) (Baker's yeast)).